The sequence spans 209 residues: MGQKVHPKGFRLGLTSEWDAQWFNEKKYSEYLLEDEAIRNFIKKNYNQAGIARVFVQRPDAERVLVSIYAARPGILIGKKGAGITELRQALEANFNRKFGIDIIELKTPETEASLVAESIAQKIEKRASYKIVMKRAITAALRRGARGIKIMVSGRLAGAEIARTEWYLKGRLPLQTLRSVIDYSTARAETKYGTIGIKVWIYKGDQNI.

The region spanning 38-107 (IRNFIKKNYN…KFGIDIIELK (70 aa)) is the KH type-2 domain.

It belongs to the universal ribosomal protein uS3 family. Part of the 30S ribosomal subunit. Forms a tight complex with proteins S10 and S14.

Binds the lower part of the 30S subunit head. Binds mRNA in the 70S ribosome, positioning it for translation. The protein is Small ribosomal subunit protein uS3 of Fervidobacterium nodosum (strain ATCC 35602 / DSM 5306 / Rt17-B1).